We begin with the raw amino-acid sequence, 118 residues long: Large ribosomal subunit protein bL19 (118 aa).

The protein belongs to the bacterial ribosomal protein bL19 family.

Functionally, this protein is located at the 30S-50S ribosomal subunit interface and may play a role in the structure and function of the aminoacyl-tRNA binding site. In Beutenbergia cavernae (strain ATCC BAA-8 / DSM 12333 / CCUG 43141 / JCM 11478 / NBRC 16432 / NCIMB 13614 / HKI 0122), this protein is Large ribosomal subunit protein bL19.